An 826-amino-acid polypeptide reads, in one-letter code: Lon protease (826 aa).

In terms of domain architecture, Lon N-terminal spans 26-221 (LPMLPVRDVV…AVNGFVSREV (196 aa)). 373-380 (GPPGVGKT) lines the ATP pocket. One can recognise a Lon proteolytic domain in the interval 609-790 (EPQIGLATGL…NEVLEKALLP (182 aa)). Residues Ser696 and Lys739 contribute to the active site. Residues 788 to 826 (LLPAEKKKAPPKKKPPKKAAKPKAKKTQPKAKTTEAADK) are disordered. Basic residues predominate over residues 796–816 (APPKKKPPKKAAKPKAKKTQP).

The protein belongs to the peptidase S16 family. Homohexamer. Organized in a ring with a central cavity.

The protein resides in the cytoplasm. It carries out the reaction Hydrolysis of proteins in presence of ATP.. Its function is as follows. ATP-dependent serine protease that mediates the selective degradation of mutant and abnormal proteins as well as certain short-lived regulatory proteins. Required for cellular homeostasis and for survival from DNA damage and developmental changes induced by stress. Degrades polypeptides processively to yield small peptide fragments that are 5 to 10 amino acids long. Binds to DNA in a double-stranded, site-specific manner. The chain is Lon protease from Desulfatibacillum aliphaticivorans.